Consider the following 181-residue polypeptide: Ribonuclease M5 (181 aa).

The Toprim domain occupies 5 to 88 (KEIIVVEGKD…IKHAYLNTKD (84 aa)). Residues E11, D57, and D59 each coordinate Mg(2+).

Belongs to the ribonuclease M5 family. Mg(2+) is required as a cofactor.

Its subcellular location is the cytoplasm. It catalyses the reaction Endonucleolytic cleavage of RNA, removing 21 and 42 nucleotides, respectively, from the 5'- and 3'-termini of a 5S-rRNA precursor.. Required for correct processing of both the 5' and 3' ends of 5S rRNA precursor. Cleaves both sides of a double-stranded region yielding mature 5S rRNA in one step. The sequence is that of Ribonuclease M5 from Borreliella burgdorferi (strain ATCC 35210 / DSM 4680 / CIP 102532 / B31) (Borrelia burgdorferi).